Reading from the N-terminus, the 396-residue chain is 1-deoxy-D-xylulose 5-phosphate reductoisomerase (396 aa).

NADPH is bound by residues Thr-13, Gly-14, Ser-15, Ile-16, and Asn-127. Residue Lys-128 participates in 1-deoxy-D-xylulose 5-phosphate binding. Glu-129 contacts NADPH. Asp-153 serves as a coordination point for Mn(2+). 1-deoxy-D-xylulose 5-phosphate is bound by residues Ser-154, Glu-155, Ser-184, and His-207. Mn(2+) is bound at residue Glu-155. Gly-213 contributes to the NADPH binding site. The 1-deoxy-D-xylulose 5-phosphate site is built by Ser-220, Asn-225, Lys-226, and Glu-229. Mn(2+) is bound at residue Glu-229.

Belongs to the DXR family. The cofactor is Mg(2+). Mn(2+) is required as a cofactor.

It catalyses the reaction 2-C-methyl-D-erythritol 4-phosphate + NADP(+) = 1-deoxy-D-xylulose 5-phosphate + NADPH + H(+). It participates in isoprenoid biosynthesis; isopentenyl diphosphate biosynthesis via DXP pathway; isopentenyl diphosphate from 1-deoxy-D-xylulose 5-phosphate: step 1/6. Catalyzes the NADPH-dependent rearrangement and reduction of 1-deoxy-D-xylulose-5-phosphate (DXP) to 2-C-methyl-D-erythritol 4-phosphate (MEP). The polypeptide is 1-deoxy-D-xylulose 5-phosphate reductoisomerase (Pseudomonas paraeruginosa (strain DSM 24068 / PA7) (Pseudomonas aeruginosa (strain PA7))).